A 435-amino-acid chain; its full sequence is MPVTHRKSDASDMNSDTSPSCRLRAFSRGGSLESRSSSSRSRSFTLDDESLKYLTHEEKDVLLFFEETIDSLDEDFEEPVLCDGGVCCLCSPSLEESTSSPSEPEDVIDLVQPAPGAGEAEGLPEGTQAAGPAPAGKEHRKQDAETPPPPDPPAPETLLAPPPLPSTPDPPRRELRAPSPPVEHPRLLRSVPTPLVMAQKISERMAGNEALSPTSPFREGRPGEWRTPAARGPRSGDPGPGPSHPAQPKAPRFPSNIIVTNGAAREPRRTLSRAAVSVQERRAQVLATIHGHAGAFPAAGDAGEGAPGGGSSPERVARGRGLPGPAESLRAGGQAPRGPALANGFPSAHEALKSAPSSFAPAGKSLCFRPGPALPSTRARQSFPGPRQPNGAQDWRRADSLPRPQGITVQFAGRGSSEEARREALRKLGLLRESS.

Residues 1-10 are compositionally biased toward basic and acidic residues; the sequence is MPVTHRKSDA. The tract at residues 1 to 22 is disordered; that stretch reads MPVTHRKSDASDMNSDTSPSCR. S8 is modified (phosphoserine). The span at 11 to 20 shows a compositional bias: polar residues; that stretch reads SDMNSDTSPS. S43 carries the post-translational modification Phosphoserine. Phosphothreonine is present on T45. 2 stretches are compositionally biased toward low complexity: residues 92–102 and 113–126; these read PSLEESTSSPS and PAPG…LPEG. Disordered regions lie at residues 92–276 and 295–420; these read PSLE…RAAV and AFPA…SEEA. Position 146 is a phosphothreonine (T146). The span at 146–169 shows a compositional bias: pro residues; it reads TPPPPDPPAPETLLAPPPLPSTPD. Residue S166 is modified to Phosphoserine. The residue at position 167 (T167) is a Phosphothreonine. A phosphoserine mark is found at S179, S212, and S215. Low complexity predominate over residues 228-237; the sequence is PAARGPRSGD. R252 is modified (asymmetric dimethylarginine; alternate). An Omega-N-methylarginine; alternate modification is found at R252. Gly residues predominate over residues 302–311; that stretch reads AGEGAPGGGS. S312 bears the Phosphoserine mark. An Omega-N-methylarginine; alternate modification is found at R320. R320 carries the post-translational modification Dimethylated arginine; alternate. Position 378 is an omega-N-methylarginine (R378). Position 400 is a phosphoserine (S400). The residue at position 414 (R414) is an Omega-N-methylarginine.

In Homo sapiens (Human), this protein is Proline and serine-rich protein 2 (PROSER2).